The sequence spans 217 residues: MSISAVVFDRDGVLTSFDWTRAEEDVRRITGLPLEEIERRWGGWLNGLTIDDAFVETQPISEFLSSLARELELGSKARDELVRLDYMAFAQGYPDARPALEEARRRGLKVGVLTNNSLLVSARSLLQCAALHDLVDVVLSSQMIGAAKPDPRAYQAIAEALGVSTTSCLFFDDIADWVEGARCAGMRAYLVDRSGQTRDGVVRDLSSLGAILDGAGP.

Residue Asp-9 is the Nucleophile of the active site.

Belongs to the HAD-like hydrolase superfamily.

Its function is as follows. Able to hydrolyze geranyl diphosphate (GPP), farnesyl diphosphate (FPP) and geranylgeranyl diphosphate (GGPP) to respectively yield geraniol, farnesol and geranylgeraniol. The chain is Phosphatase MT3486 from Mycobacterium tuberculosis (strain CDC 1551 / Oshkosh).